A 330-amino-acid chain; its full sequence is Ferredoxin--NADP reductase (330 aa).

Residues glutamate 35, glutamine 43, tyrosine 48, valine 90, phenylalanine 123, aspartate 285, and threonine 326 each contribute to the FAD site.

It belongs to the ferredoxin--NADP reductase type 2 family. As to quaternary structure, homodimer. The cofactor is FAD.

The enzyme catalyses 2 reduced [2Fe-2S]-[ferredoxin] + NADP(+) + H(+) = 2 oxidized [2Fe-2S]-[ferredoxin] + NADPH. The chain is Ferredoxin--NADP reductase from Streptococcus pyogenes serotype M6 (strain ATCC BAA-946 / MGAS10394).